Reading from the N-terminus, the 410-residue chain is Probable protein S-acyltransferase 6 (410 aa).

2 consecutive transmembrane segments (helical) span residues 45-65 (LGLT…FVAS) and 76-96 (GVSI…LLML). Positions 108-129 (NSHPPEPEVVDGNTGSGTSQTP) are disordered. Residues 147–197 (KYCDTCMLYRPPRCSHCSICNNCVERFDHHCPWVGQCIAQRNYRFFFMFVF) enclose the DHHC domain. Residue cysteine 177 is the S-palmitoyl cysteine intermediate of the active site. 2 consecutive transmembrane segments (helical) span residues 191 to 211 (FFFM…AFCC) and 235 to 255 (SIAL…LTCF). Serine 325 carries the phosphoserine modification.

Belongs to the DHHC palmitoyltransferase family.

The protein localises to the cell membrane. The enzyme catalyses L-cysteinyl-[protein] + hexadecanoyl-CoA = S-hexadecanoyl-L-cysteinyl-[protein] + CoA. In terms of biological role, palmitoyl acyltransferase. In Arabidopsis thaliana (Mouse-ear cress), this protein is Probable protein S-acyltransferase 6 (PAT06).